Here is a 301-residue protein sequence, read N- to C-terminus: Glycine--tRNA ligase alpha subunit (301 aa).

Belongs to the class-II aminoacyl-tRNA synthetase family. Tetramer of two alpha and two beta subunits.

It localises to the cytoplasm. It catalyses the reaction tRNA(Gly) + glycine + ATP = glycyl-tRNA(Gly) + AMP + diphosphate. The protein is Glycine--tRNA ligase alpha subunit of Proteus mirabilis (strain HI4320).